Reading from the N-terminus, the 707-residue chain is Elongation factor G (707 aa).

The 283-residue stretch at 8 to 290 (ERYRNIGICA…AVIEYLPSPT (283 aa)) folds into the tr-type G domain. Residues 17–24 (AHVDAGKT), 88–92 (DTPGH), and 142–145 (NKMD) each bind GTP.

It belongs to the TRAFAC class translation factor GTPase superfamily. Classic translation factor GTPase family. EF-G/EF-2 subfamily.

It localises to the cytoplasm. Functionally, catalyzes the GTP-dependent ribosomal translocation step during translation elongation. During this step, the ribosome changes from the pre-translocational (PRE) to the post-translocational (POST) state as the newly formed A-site-bound peptidyl-tRNA and P-site-bound deacylated tRNA move to the P and E sites, respectively. Catalyzes the coordinated movement of the two tRNA molecules, the mRNA and conformational changes in the ribosome. This Idiomarina loihiensis (strain ATCC BAA-735 / DSM 15497 / L2-TR) protein is Elongation factor G.